The following is a 179-amino-acid chain: Large ribosomal subunit protein uL5 (179 aa).

This sequence belongs to the universal ribosomal protein uL5 family. In terms of assembly, part of the 50S ribosomal subunit; part of the 5S rRNA/L5/L18/L25 subcomplex. Contacts the 5S rRNA and the P site tRNA. Forms a bridge to the 30S subunit in the 70S ribosome.

This is one of the proteins that bind and probably mediate the attachment of the 5S RNA into the large ribosomal subunit, where it forms part of the central protuberance. In the 70S ribosome it contacts protein S13 of the 30S subunit (bridge B1b), connecting the 2 subunits; this bridge is implicated in subunit movement. Contacts the P site tRNA; the 5S rRNA and some of its associated proteins might help stabilize positioning of ribosome-bound tRNAs. The protein is Large ribosomal subunit protein uL5 of Vibrio campbellii (strain ATCC BAA-1116).